The following is a 208-amino-acid chain: Germin-like protein subfamily 3 member 1 (208 aa).

An N-terminal signal peptide occupies residues 1–18; sequence MLRTIFLLSLLFALSNAS. A disulfide bridge links Cys23 with Cys38. The 147-residue stretch at 52–198 folds into the Cupin type-1 domain; the sequence is SGLGTPGNTT…TTFLDATTVK (147 aa). Asn59 carries an N-linked (GlcNAc...) asparagine glycan. Mn(2+)-binding residues include His100, His102, Glu107, and His146.

It belongs to the germin family. In terms of assembly, may not form oligomer. Expressed during germination, and also in green shoots, etiolated seedlings and whole seedlings.

It localises to the secreted. Its subcellular location is the extracellular space. The protein localises to the apoplast. May play a role in plant defense. Probably has no oxalate oxidase activity even if the active site is conserved. In Arabidopsis thaliana (Mouse-ear cress), this protein is Germin-like protein subfamily 3 member 1 (GLP1).